Here is a 414-residue protein sequence, read N- to C-terminus: Cytochrome P450 CYP105Q4 (414 aa).

Residues 1 to 12 (MSDTLASPSPET) are compositionally biased toward polar residues. The tract at residues 1-21 (MSDTLASPSPETASGIPDYPM) is disordered. Histidine 108, glutamine 302, arginine 304, histidine 361, and cysteine 363 together coordinate heme.

It belongs to the cytochrome P450 family. It depends on heme as a cofactor.

Its function is as follows. Can bind oleic-acid derivatives, amphotericin B like precursors and a variety of nitrogen ligand donors. The protein is Cytochrome P450 CYP105Q4 of Mycobacterium marinum (strain ATCC BAA-535 / M).